A 230-amino-acid polypeptide reads, in one-letter code: Sugar fermentation stimulation protein homolog (230 aa).

The protein belongs to the SfsA family.

The polypeptide is Sugar fermentation stimulation protein homolog (Clostridium perfringens (strain 13 / Type A)).